The primary structure comprises 254 residues: Proline-rich protein 23A3 (254 aa).

3 disordered regions span residues 1–50 (MLRT…LEAP), 161–196 (ASPP…GAEQ), and 212–254 (PFPG…LVYE). The segment covering 35–50 (EPACPEPLAQPELEAP) has biased composition (low complexity). Residues 214 to 241 (PGSPLQPLPPSPSRNPQEQLPPCPPCSP) show a composition bias toward pro residues. The span at 243–254 (APRRARKRLVYE) shows a compositional bias: basic residues.

Belongs to the PRR23 family.

This Mus musculus (Mouse) protein is Proline-rich protein 23A3.